The primary structure comprises 580 residues: Bifunctional lycopene cyclase/phytoene synthase (580 aa).

A run of 3 helical transmembrane segments spans residues 3 to 23, 35 to 55, and 65 to 85; these read WEYAQVHLKYTIPFGVVLAAV, KLVFLITVAVVSTIPWDSYLI, and GVVVGLTAWDIPAEELFFFVI. The N-linked (GlcNAc...) asparagine glycan is linked to N89. A run of 4 helical transmembrane segments spans residues 116–136, 139–159, 171–191, and 214–234; these read IAGQILFASAIIFGLVSVSSG, GMYMGLILIWACPFLLFLWSI, NTALPIALPTLYLWVVDTFAL, and IEEAVFFLLTNTLIVFGLIAC.

In the N-terminal section; belongs to the lycopene beta-cyclase family. The protein in the C-terminal section; belongs to the phytoene/squalene synthase family.

It is found in the membrane. The catalysed reaction is all-trans-lycopene = gamma-carotene. It carries out the reaction gamma-carotene = all-trans-beta-carotene. The enzyme catalyses 2 (2E,6E,10E)-geranylgeranyl diphosphate = 15-cis-phytoene + 2 diphosphate. It functions in the pathway carotenoid biosynthesis; beta-carotene biosynthesis. Its pathway is carotenoid biosynthesis; phytoene biosynthesis; all-trans-phytoene from geranylgeranyl diphosphate: step 1/1. Functionally, bifunctional enzyme; part of the car gene cluster that mediates the biosynthesis of neurosporaxanthin, a carboxylic apocarotenoid acting as an essential protective pigments and leading to orange pigmentation. CarAR catalyzes the first step of the pathway by converting geranylgeranyl diphosphate to phytoene, as well as the later cyclization step that transforms the carB product lycopene into gamma-carotene. CarAR also converts part of gamma-carotene into beta-carotene. Neurosporaxanthin is synthesized from geranyl-geranyl pyrophosphate (GGPP) through several enzymatic activities. Phytoene synthase activity performed by the bifunctional enzyme carAR first produces phytoene from geranyl-geranyl pyrophosphate (GGPP). The phytoene dehydrogenase carB then introduces 4 desaturations to lead to lycopene which is substrate of the carotene cyclase activity of carAR that leads to the production of gamma-carotene. CarB then performs a 5th desaturation reaction to yield torulene. Torulene is the substrate of the dioxidase carT that breaks the molecule, removing five carbon atoms to yield beta-apo-4'-carotenal, whereas the aldehyde dehydrogenase carD mediates the last step by converting beta-apo-4'-carotenal into neurosporaxanthin. The protein is Bifunctional lycopene cyclase/phytoene synthase of Gibberella fujikuroi (strain CBS 195.34 / IMI 58289 / NRRL A-6831) (Bakanae and foot rot disease fungus).